The following is a 203-amino-acid chain: Glycerol-3-phosphate acyltransferase (203 aa).

A run of 4 helical transmembrane segments spans residues 4–24 (MAVT…AVLI), 80–100 (PVLL…PLFF), 117–137 (PIGL…AILF), and 139–159 (YSSL…WMIK).

Belongs to the PlsY family. Probably interacts with PlsX.

The protein resides in the cell inner membrane. The enzyme catalyses an acyl phosphate + sn-glycerol 3-phosphate = a 1-acyl-sn-glycero-3-phosphate + phosphate. Its pathway is lipid metabolism; phospholipid metabolism. In terms of biological role, catalyzes the transfer of an acyl group from acyl-phosphate (acyl-PO(4)) to glycerol-3-phosphate (G3P) to form lysophosphatidic acid (LPA). This enzyme utilizes acyl-phosphate as fatty acyl donor, but not acyl-CoA or acyl-ACP. This Vibrio vulnificus (strain YJ016) protein is Glycerol-3-phosphate acyltransferase.